The sequence spans 217 residues: MDIVSVALQRYSTKAFDPSKKLTAEEADKIKTLLQYSPSSTNSQPWHFIVASTEEGKARVAKSAAGNYTFNERKMLDASHVVVFCAKTAMDDAWLERVVDQEDADGRFATPEAKAANDKGRRFFADMHRVSLKDDHQWMAKQVYLNVGNFLLGVAAMGLDAVPIEGFDAEVLDAEFGLKEKGYTSLVVVPVGHHSVEDFNAGLPKSRLPLETTLTEV.

10–14 is a binding site for FMN; that stretch reads RYSTK. Residues Lys-14, Thr-41, Asn-71, Lys-74, and Arg-107 each contribute to the NAD(+) site. Position 71 (Asn-71) interacts with FMN. FMN-binding positions include 165-166 and 205-207; these read EG and KSR.

It belongs to the nitroreductase family. In terms of assembly, homodimer. FMN is required as a cofactor.

Functionally, reduction of a variety of nitroaromatic compounds using NADH (and to lesser extent NADPH) as source of reducing equivalents; two electrons are transferred. Capable of reducing nitrofurazone. In Salmonella typhimurium (strain LT2 / SGSC1412 / ATCC 700720), this protein is Oxygen-insensitive NAD(P)H nitroreductase.